We begin with the raw amino-acid sequence, 127 residues long: Evasin P467 (127 aa).

Positions Met-1–Gly-21 are cleaved as a signal peptide. Cystine bridges form between Cys-42/Cys-63, Cys-59/Cys-100, Cys-76/Cys-105, and Cys-95/Cys-114. Residues Asn-49 and Asn-94 are each glycosylated (N-linked (GlcNAc...) asparagine).

Its subcellular location is the secreted. Salivary chemokine-binding protein which binds to host chemokines CCL1, CCL2, CCL3 and CCL5. The protein is Evasin P467 of Rhipicephalus pulchellus (Yellow backed tick).